Reading from the N-terminus, the 131-residue chain is Phosphoribosyl-AMP cyclohydrolase (131 aa).

Aspartate 90 is a Mg(2+) binding site. A Zn(2+)-binding site is contributed by cysteine 91. 2 residues coordinate Mg(2+): aspartate 92 and aspartate 94. Residues cysteine 107 and cysteine 114 each coordinate Zn(2+).

Belongs to the PRA-CH family. Homodimer. Mg(2+) is required as a cofactor. Requires Zn(2+) as cofactor.

It localises to the cytoplasm. The enzyme catalyses 1-(5-phospho-beta-D-ribosyl)-5'-AMP + H2O = 1-(5-phospho-beta-D-ribosyl)-5-[(5-phospho-beta-D-ribosylamino)methylideneamino]imidazole-4-carboxamide. The protein operates within amino-acid biosynthesis; L-histidine biosynthesis; L-histidine from 5-phospho-alpha-D-ribose 1-diphosphate: step 3/9. Functionally, catalyzes the hydrolysis of the adenine ring of phosphoribosyl-AMP. The polypeptide is Phosphoribosyl-AMP cyclohydrolase (Hyphomonas neptunium (strain ATCC 15444)).